The following is a 964-amino-acid chain: Phosphoenolpyruvate carboxylase (964 aa).

A Phosphoserine modification is found at S11. Active-site residues include H172 and K600.

The protein belongs to the PEPCase type 1 family. Homotetramer. Mg(2+) serves as cofactor.

It localises to the cytoplasm. The catalysed reaction is oxaloacetate + phosphate = phosphoenolpyruvate + hydrogencarbonate. The protein operates within photosynthesis; C4 acid pathway. By light-reversible phosphorylation. Its function is as follows. Through the carboxylation of phosphoenolpyruvate (PEP) it forms oxaloacetate, a four-carbon dicarboxylic acid source for the tricarboxylic acid cycle. The protein is Phosphoenolpyruvate carboxylase (PPC) of Nicotiana tabacum (Common tobacco).